Consider the following 425-residue polypeptide: tRNA(Ile)-lysidine synthase (425 aa).

27-32 lines the ATP pocket; it reads SGGLDS.

The protein belongs to the tRNA(Ile)-lysidine synthase family.

The protein localises to the cytoplasm. The catalysed reaction is cytidine(34) in tRNA(Ile2) + L-lysine + ATP = lysidine(34) in tRNA(Ile2) + AMP + diphosphate + H(+). Functionally, ligates lysine onto the cytidine present at position 34 of the AUA codon-specific tRNA(Ile) that contains the anticodon CAU, in an ATP-dependent manner. Cytidine is converted to lysidine, thus changing the amino acid specificity of the tRNA from methionine to isoleucine. In Streptococcus pneumoniae (strain Hungary19A-6), this protein is tRNA(Ile)-lysidine synthase.